We begin with the raw amino-acid sequence, 400 residues long: Large envelope protein (400 aa).

Met-1 carries the N-acetylmethionine modification. Disordered regions lie at residues 1-64, 85-118, and 143-174; these read MGGW…GAFG, LTTV…SHPQ, and PGGS…PAPN. The N-myristoyl glycine; by host moiety is linked to residue Gly-2. A pre-S1 region spans residues 2–119; that stretch reads GGWSSKPRQG…PPLRDSHPQA (118 aa). Positions 2–174 are pre-S; that stretch reads GGWSSKPRQG…SSRTGDPAPN (173 aa). Residues 2–181 lie on the Virion surface; in external conformation side of the membrane; it reads GGWSSKPRQG…APNMESTTSG (180 aa). The Intravirion; in internal conformation portion of the chain corresponds to 2 to 253; it reads GGWSSKPRQG…PGYRWMCLRR (252 aa). N-linked (GlcNAc...) asparagine glycosylation is present at Trp-4. A compositionally biased stretch (polar residues) spans 96 to 106; sequence STNRQSGRQPT. The segment at 120–174 is pre-S2; that stretch reads MQWNSTTFHQVLLDPRVRGLYFPPGGSSSGTVNPVPTTASPISSISSRTGDPAPN. The segment covering 155–166 has biased composition (low complexity); sequence PTTASPISSISS. Residues 182 to 202 traverse the membrane as a helical segment; it reads FLGPLLVLQAGFFLLTRILTI. Over 203-253 the chain is Intravirion; in external conformation; the sequence is PQSLDSWWTSLNFLGGAPTCPGQNSQSPTSNHSPTSCPPICPGYRWMCLRR. Residues 254 to 274 form a helical membrane-spanning segment; that stretch reads FIIFLFILLLCLIFLLVLLDY. Residues 275-348 are Virion surface-facing; it reads QGMLPVCPLL…GASVRFSWLS (74 aa). Asn-320 carries N-linked (GlcNAc...) asparagine; by host glycosylation. A helical membrane pass occupies residues 349–369; that stretch reads LLVPFVQWFVGLSPTVWLSVI. At 370-375 the chain is on the intravirion side; the sequence is WMMWYW. A helical membrane pass occupies residues 376–398; it reads GPSLYNILSPFLPLLPIFFCLWV. Topologically, residues 399-400 are virion surface; it reads YI.

It belongs to the orthohepadnavirus major surface antigen family. In terms of assembly, in its internal form (Li-HBsAg), interacts with the capsid protein and with the isoform S. Interacts with host chaperone CANX. Associates with host chaperone CANX through its pre-S2 N glycan; this association may be essential for isoform M proper secretion. As to quaternary structure, interacts with isoform L. Interacts with the antigens of satellite virus HDV (HDVAgs); this interaction is required for encapsidation of HDV genomic RNA. Isoform M is N-terminally acetylated by host at a ratio of 90%, and N-glycosylated by host at the pre-S2 region. Post-translationally, myristoylated.

It localises to the virion membrane. In terms of biological role, the large envelope protein exists in two topological conformations, one which is termed 'external' or Le-HBsAg and the other 'internal' or Li-HBsAg. In its external conformation the protein attaches the virus to cell receptors and thereby initiating infection. This interaction determines the species specificity and liver tropism. This attachment induces virion internalization predominantly through caveolin-mediated endocytosis. The large envelope protein also assures fusion between virion membrane and endosomal membrane. In its internal conformation the protein plays a role in virion morphogenesis and mediates the contact with the nucleocapsid like a matrix protein. Functionally, the middle envelope protein plays an important role in the budding of the virion. It is involved in the induction of budding in a nucleocapsid independent way. In this process the majority of envelope proteins bud to form subviral lipoprotein particles of 22 nm of diameter that do not contain a nucleocapsid. In Homo sapiens (Human), this protein is Large envelope protein.